The sequence spans 113 residues: MKCLVVLTALFGISTASFLGCNLSPVWGVKNAYRSGLQTYWCPPGLKFDPFGCCCDFPFDDLVEDLAGLLGGAGNGGNGGGGNGGNGGGGNGGNNGNGNGNNGLKKYETCYDC.

An N-terminal signal peptide occupies residues 1-16; that stretch reads MKCLVVLTALFGISTA. The span at 81–101 shows a compositional bias: gly residues; it reads GGNGGNGGGGNGGNNGNGNGN. The interval 81-103 is disordered; that stretch reads GGNGGNGGGGNGGNNGNGNGNNG.

Nacreous layer of shell (at protein level).

Its subcellular location is the secreted. This is an uncharacterized protein from Margaritifera margaritifera (Freshwater pearl mussel).